Here is a 295-residue protein sequence, read N- to C-terminus: Tyrosine recombinase XerD (295 aa).

In terms of domain architecture, Core-binding (CB) spans 1-85 (MNTIIEEYLN…TIRSFHQFAL (85 aa)). In terms of domain architecture, Tyr recombinase spans 106 to 289 (KLPDVLEIDE…SKSQIRKMYT (184 aa)). Residues arginine 146, lysine 170, histidine 241, arginine 244, and histidine 267 contribute to the active site. The O-(3'-phospho-DNA)-tyrosine intermediate role is filled by tyrosine 276.

This sequence belongs to the 'phage' integrase family. XerD subfamily. As to quaternary structure, forms a cyclic heterotetrameric complex composed of two molecules of XerC and two molecules of XerD.

The protein resides in the cytoplasm. In terms of biological role, site-specific tyrosine recombinase, which acts by catalyzing the cutting and rejoining of the recombining DNA molecules. The XerC-XerD complex is essential to convert dimers of the bacterial chromosome into monomers to permit their segregation at cell division. It also contributes to the segregational stability of plasmids. The chain is Tyrosine recombinase XerD from Staphylococcus epidermidis (strain ATCC 35984 / DSM 28319 / BCRC 17069 / CCUG 31568 / BM 3577 / RP62A).